The following is a 234-amino-acid chain: Large ribosomal subunit protein uL1 (234 aa).

Belongs to the universal ribosomal protein uL1 family. Part of the 50S ribosomal subunit.

Binds directly to 23S rRNA. The L1 stalk is quite mobile in the ribosome, and is involved in E site tRNA release. In terms of biological role, protein L1 is also a translational repressor protein, it controls the translation of the L11 operon by binding to its mRNA. The protein is Large ribosomal subunit protein uL1 of Vibrio atlanticus (strain LGP32) (Vibrio splendidus (strain Mel32)).